Reading from the N-terminus, the 426-residue chain is Probable imidazolonepropionase (426 aa).

4-imidazolone-5-propanoate-binding residues include Tyr159 and His192. N-formimidoyl-L-glutamate is bound at residue Tyr159. Residue His260 coordinates Fe(3+). A Zn(2+)-binding site is contributed by His260. A 4-imidazolone-5-propanoate-binding site is contributed by Glu263. Residue Asp334 participates in Fe(3+) binding. Residue Asp334 participates in Zn(2+) binding. Asn336 serves as a coordination point for N-formimidoyl-L-glutamate.

Belongs to the metallo-dependent hydrolases superfamily. HutI family. It depends on Zn(2+) as a cofactor. Requires Fe(3+) as cofactor.

It carries out the reaction 4-imidazolone-5-propanoate + H2O = N-formimidoyl-L-glutamate. It participates in amino-acid degradation; L-histidine degradation into L-glutamate; N-formimidoyl-L-glutamate from L-histidine: step 3/3. This Homo sapiens (Human) protein is Probable imidazolonepropionase (AMDHD1).